The following is a 152-amino-acid chain: Transcriptional regulator MraZ (152 aa).

2 SpoVT-AbrB domains span residues 5-52 (ATLV…PLPE) and 81-124 (ASEC…DETT).

The protein belongs to the MraZ family. As to quaternary structure, forms oligomers.

The protein resides in the cytoplasm. The protein localises to the nucleoid. In terms of biological role, negatively regulates its own expression and that of the subsequent genes in the proximal part of the division and cell wall (dcw) gene cluster. Acts by binding directly to DNA. May also regulate the expression of genes outside the dcw cluster. In Klebsiella pneumoniae (strain 342), this protein is Transcriptional regulator MraZ.